The following is a 334-amino-acid chain: Magnesium-chelatase 38 kDa subunit (334 aa).

Residue 36–43 participates in ATP binding; it reads GDRGTGKS.

The protein belongs to the Mg-chelatase subunits D/I family.

The catalysed reaction is protoporphyrin IX + Mg(2+) + ATP + H2O = Mg-protoporphyrin IX + ADP + phosphate + 3 H(+). It functions in the pathway porphyrin-containing compound metabolism; bacteriochlorophyll biosynthesis. Its function is as follows. Involved in bacteriochlorophyll biosynthesis; introduces a magnesium ion into protoporphyrin IX to yield Mg-protoporphyrin IX. The protein is Magnesium-chelatase 38 kDa subunit (bchI) of Cereibacter sphaeroides (strain ATCC 17023 / DSM 158 / JCM 6121 / CCUG 31486 / LMG 2827 / NBRC 12203 / NCIMB 8253 / ATH 2.4.1.) (Rhodobacter sphaeroides).